Here is an 840-residue protein sequence, read N- to C-terminus: Leucine--tRNA ligase (840 aa).

The short motif at 44 to 55 is the 'HIGH' region element; it reads PYPSANGLHVGH. The 'KMSKS' region motif lies at 617 to 621; that stretch reads KMSKS. Residue Lys-620 coordinates ATP.

Belongs to the class-I aminoacyl-tRNA synthetase family.

Its subcellular location is the cytoplasm. The catalysed reaction is tRNA(Leu) + L-leucine + ATP = L-leucyl-tRNA(Leu) + AMP + diphosphate. The protein is Leucine--tRNA ligase of Borrelia garinii subsp. bavariensis (strain ATCC BAA-2496 / DSM 23469 / PBi) (Borreliella bavariensis).